Consider the following 61-residue polypeptide: Metallothionein-2D (61 aa).

Met1 bears the N-acetylmethionine mark. The interval 1–29 (MDPNCSCATRDSCACASSCKCKECKCTSC) is beta. Positions 5, 7, 13, 15, 19, 21, 24, 26, 29, 33, 34, 36, 37, 41, 44, 48, 50, 57, 59, and 60 each coordinate a divalent metal cation. The segment at 30-61 (KKSCCSCCPAGCTKCAQGCICKGASDKCSCCA) is alpha.

This sequence belongs to the metallothionein superfamily. Type 1 family. Monomer.

In terms of biological role, metallothioneins have a high content of cysteine residues that bind various heavy metals; these proteins are transcriptionally regulated by both heavy metals and glucocorticoids. The chain is Metallothionein-2D from Oryctolagus cuniculus (Rabbit).